The following is an 873-amino-acid chain: Outer membrane usher protein FimC (873 aa).

The N-terminal stretch at 1–15 is a signal peptide; that stretch reads MKQIPLILAMSLAFA. A disulfide bridge connects residues C815 and C838.

The protein belongs to the fimbrial export usher family.

The protein localises to the cell outer membrane. Its function is as follows. Probable porin-like protein necessary for the assembly of a pilin-type protein. This is Outer membrane usher protein FimC (fimC) from Bordetella pertussis (strain Tohama I / ATCC BAA-589 / NCTC 13251).